The chain runs to 268 residues: L-cystine-binding protein TcyA (268 aa).

A signal peptide spans 1–19 (MKKALLALFMVVSIAALAA). Cysteine 20 is lipidated: N-palmitoyl cysteine. A lipid anchor (S-diacylglycerol cysteine) is attached at cysteine 20.

It belongs to the bacterial solute-binding protein 3 family. The complex is composed of two ATP-binding proteins (TcyC), two transmembrane proteins (TcyB) and a solute-binding protein (TcyA).

The protein resides in the cell membrane. Part of the ABC transporter complex TcyABC involved in L-cystine import. This is L-cystine-binding protein TcyA (tcyA) from Bacillus subtilis (strain 168).